Reading from the N-terminus, the 417-residue chain is Probable secreted aspartic protease ARB_07536 (417 aa).

The N-terminal stretch at 1–20 (MRGILILVALGAATIPQASA) is a signal peptide. Residues 42-413 (NTDLVTIGTP…DFEKNRVGLA (372 aa)) form the Peptidase A1 domain. Residues asparagine 74, asparagine 91, asparagine 100, asparagine 170, asparagine 276, and asparagine 314 are each glycosylated (N-linked (GlcNAc...) asparagine). Cysteines 333 and 373 form a disulfide.

It belongs to the peptidase A1 family.

The protein localises to the secreted. Its function is as follows. Probable secreted aspartic protease that supplies the fungus with nutrient amino acids. May be able to degrade the selected host's proteins involved in the immune defense. The polypeptide is Probable secreted aspartic protease ARB_07536 (Arthroderma benhamiae (strain ATCC MYA-4681 / CBS 112371) (Trichophyton mentagrophytes)).